A 360-amino-acid polypeptide reads, in one-letter code: 3-dehydroquinate synthase (360 aa).

Residues 69-74, 103-107, 127-128, Lys-140, Lys-149, and 167-170 each bind NAD(+); these read DGEKYK, GVVGD, TT, and TLDT. Residues Glu-182, His-246, and His-263 each coordinate Zn(2+).

The protein belongs to the sugar phosphate cyclases superfamily. Dehydroquinate synthase family. Requires Co(2+) as cofactor. Zn(2+) serves as cofactor. NAD(+) is required as a cofactor.

The protein localises to the cytoplasm. The catalysed reaction is 7-phospho-2-dehydro-3-deoxy-D-arabino-heptonate = 3-dehydroquinate + phosphate. Its pathway is metabolic intermediate biosynthesis; chorismate biosynthesis; chorismate from D-erythrose 4-phosphate and phosphoenolpyruvate: step 2/7. Catalyzes the conversion of 3-deoxy-D-arabino-heptulosonate 7-phosphate (DAHP) to dehydroquinate (DHQ). The chain is 3-dehydroquinate synthase from Vesicomyosocius okutanii subsp. Calyptogena okutanii (strain HA).